We begin with the raw amino-acid sequence, 130 residues long: Iron-sulfur cluster insertion protein ErpA (130 aa).

Residues C58, C122, and C124 each contribute to the iron-sulfur cluster site.

Belongs to the HesB/IscA family. Homodimer. The cofactor is iron-sulfur cluster.

In terms of biological role, required for insertion of 4Fe-4S clusters for at least IspG. This chain is Iron-sulfur cluster insertion protein ErpA, found in Stenotrophomonas maltophilia (strain K279a).